Reading from the N-terminus, the 131-residue chain is mRNA stability protein IGO2 (131 aa).

The segment covering 1-13 has biased composition (polar residues); that stretch reads MSEDLSPTSSRVD. The segment at 1 to 26 is disordered; it reads MSEDLSPTSSRVDLSNPHGFTKEGVD. Ser-2 is subject to N-acetylserine. Phosphoserine occurs at positions 6, 63, 108, and 119. Residues 81–131 are disordered; the sequence is VNNSSNNLPVTNPSGLRESIIRRRMSSSSGGDSISRQGSISSGPPPRSPNK. A compositionally biased stretch (low complexity) spans 106–122; that stretch reads SSSSGGDSISRQGSISS.

It belongs to the endosulfine family. In terms of processing, phosphorylated by RIM15.

The protein resides in the cytoplasm. It is found in the nucleus. Its function is as follows. Required for TORC1 to properly control gene expression and chronological life span. Plays an essential role in initiation of the G0 program by preventing the degradation of specific nutrient-regulated mRNAs via the 5'-3' mRNA decay pathway. This Saccharomyces cerevisiae (strain ATCC 204508 / S288c) (Baker's yeast) protein is mRNA stability protein IGO2 (IGO2).